Here is a 223-residue protein sequence, read N- to C-terminus: Endonuclease V (223 aa).

Residues Asp35 and Asp103 each coordinate Mg(2+).

Belongs to the endonuclease V family. Mg(2+) serves as cofactor.

It localises to the cytoplasm. It catalyses the reaction Endonucleolytic cleavage at apurinic or apyrimidinic sites to products with a 5'-phosphate.. In terms of biological role, DNA repair enzyme involved in the repair of deaminated bases. Selectively cleaves double-stranded DNA at the second phosphodiester bond 3' to a deoxyinosine leaving behind the intact lesion on the nicked DNA. The chain is Endonuclease V from Cronobacter sakazakii (strain ATCC BAA-894) (Enterobacter sakazakii).